A 1247-amino-acid chain; its full sequence is DNA-directed RNA polymerase subunit beta (1247 aa).

The protein belongs to the RNA polymerase beta chain family. In plastids the minimal PEP RNA polymerase catalytic core is composed of four subunits: alpha, beta, beta', and beta''. When a (nuclear-encoded) sigma factor is associated with the core the holoenzyme is formed, which can initiate transcription.

The protein localises to the plastid. It carries out the reaction RNA(n) + a ribonucleoside 5'-triphosphate = RNA(n+1) + diphosphate. Its function is as follows. DNA-dependent RNA polymerase catalyzes the transcription of DNA into RNA using the four ribonucleoside triphosphates as substrates. The chain is DNA-directed RNA polymerase subunit beta (rpoB) from Helicosporidium sp. subsp. Simulium jonesii (Green alga).